The primary structure comprises 1234 residues: Chromosome-associated kinesin KIF4B (1234 aa).

In terms of domain architecture, Kinesin motor spans 9-336; sequence PVRVALRCRP…LRYADRARKI (328 aa). Position 88 to 95 (88 to 95) interacts with ATP; it reads GQTGSGKT. Positions 350-999 form a coiled coil; it reads ELNHLKQQVQ…IKQKLILLQV (650 aa). Serine 394 carries the phosphoserine modification. Disordered regions lie at residues 494–513 and 712–737; these read EEAQ…AFTT and KRLK…HGKE. Residues 498-513 are compositionally biased toward polar residues; the sequence is VETSPETSRSSDAFTT. The interaction with PRC1 stretch occupies residues 663–1234; that stretch reads QWKQKKDKEV…GCSPIEEEAH (572 aa). Residues 713–737 show a composition bias toward basic and acidic residues; the sequence is RLKDALQKQREVTDKRKETQSHGKE. The Nuclear localization signal signature appears at 793–798; sequence PKLRKC. Threonine 799 carries the phosphothreonine modification. Residues serine 801, serine 951, serine 1001, serine 1013, serine 1017, and serine 1028 each carry the phosphoserine modification. Residues 1000–1234 are globular; it reads ASRQKHLPND…GCSPIEEEAH (235 aa). 4 disordered regions span residues 1007–1030, 1052–1076, 1122–1143, and 1183–1234; these read PNDT…PSRV, VNEH…KPTK, RQQG…GSFK, and TAPA…EEAH. Positions 1056–1071 are enriched in acidic residues; that stretch reads EDGDGDGDSDEGDDEE. The tract at residues 1086-1144 is CRD; required for [4Fe-4S] cluster binding and localization to the spindle midzone and midbody during anaphase and telophase; it reads QGCSCKGWCGNKQCGCRKQKSDCGVDCSCDPTKCRNRQQGKDSLGTVEQTQDSEGSFKL. Serine 1128 carries the post-translational modification Phosphoserine. Threonine 1183 carries the post-translational modification Phosphothreonine. The residue at position 1188 (serine 1188) is a Phosphoserine. A Glycyl lysine isopeptide (Lys-Gly) (interchain with G-Cter in SUMO2) cross-link involves residue lysine 1196. Serine 1227 carries the post-translational modification Phosphoserine.

Belongs to the TRAFAC class myosin-kinesin ATPase superfamily. Kinesin family. Chromokinesin subfamily. The cofactor is [2Fe-2S] cluster. Requires [4Fe-4S] cluster as cofactor. In terms of tissue distribution, specifically expressed in testis.

Its subcellular location is the nucleus matrix. It localises to the cytoplasm. It is found in the cytoskeleton. Its function is as follows. Iron-sulfur (Fe-S) cluster binding motor protein that has a role in chromosome segregation during mitosis. Translocates PRC1 to the plus ends of interdigitating spindle microtubules during the metaphase to anaphase transition, an essential step for the formation of an organized central spindle midzone and midbody and for successful cytokinesis. May play a role in mitotic chromosomal positioning and bipolar spindle stabilization. The chain is Chromosome-associated kinesin KIF4B (KIF4B) from Homo sapiens (Human).